The chain runs to 444 residues: MIAVPTGAAAAPRGPIPFYKHLYVQVLVAIAAGILLGHFYPELGTQLKPLGDAFIKLVKMIIAPVIFLTVATGIAGMTDMKKVGRVAGKAMIYFLTFSTLALIIGLIVANVVQPGAGMHIDPASLDPKAVANYAAKAHEQTITGFLSNIIPTTIVGAFADGDILQVLFFSVLFGIALALVGDKGKPVTDFLHVLTAPVFKLVSILMKAAPIGAFGAMAFTIGKYGIGSIANLALLIGTFYLTALLFVLVVLGAVARYNGFSILALIRYIKEELLLVLGTSSSEAALPALMDKMEKAGCKRSVVGLVIPTGYSFNLDGTNIYMTLAALFIAQATDIPLSLSDQILLLLVAMLSSKGAAGITGAGFITLAATLSVVPAVPVAGMALILGIDRFMSECRALTNLVGNAVATIVVARWENELDTDKLAAAMNGTPVVTDLVPQLEPAE.

9 helical membrane-spanning segments follow: residues 21-41, 57-77, 92-112, 161-181, 201-221, 234-254, 320-340, 345-365, and 368-388; these read HLYVQVLVAIAAGILLGHFYP, LVKMIIAPVIFLTVATGIAGM, IYFLTFSTLALIIGLIVANVV, GDILQVLFFSVLFGIALALVG, LVSILMKAAPIGAFGAMAFTI, LLIGTFYLTALLFVLVVLGAV, IYMTLAALFIAQATDIPLSLS, LLLVAMLSSKGAAGITGAGFI, and AATLSVVPAVPVAGMALILGI.

Belongs to the dicarboxylate/amino acid:cation symporter (DAACS) (TC 2.A.23) family.

The protein resides in the cell inner membrane. In terms of biological role, responsible for the transport of dicarboxylates such as succinate, fumarate, and malate from the periplasm across the membrane. This Brucella anthropi (strain ATCC 49188 / DSM 6882 / CCUG 24695 / JCM 21032 / LMG 3331 / NBRC 15819 / NCTC 12168 / Alc 37) (Ochrobactrum anthropi) protein is C4-dicarboxylate transport protein.